The primary structure comprises 416 residues: Pre-mRNA-splicing factor slu-7 (416 aa).

Residues 1–34 form a disordered region; the sequence is MPPPPPNRREQATAAPSSTDKSETGAGAARKEDN. Residues 95–112 form a CCHC-type zinc finger; it reads GACENCGAMGHKKKDCLE. Composition is skewed to basic and acidic residues over residues 168–179 and 188–213; these read RRALQGDQKTPD and DDKS…QSMR. The disordered stretch occupies residues 168 to 213; the sequence is RRALQGDQKTPDGEGADGPEDDKSGFKYDEESDMGRDRATTKQSMR.

Belongs to the SLU7 family. In terms of assembly, associated with the spliceosome.

It is found in the nucleus. Involved in pre-mRNA splicing. This chain is Pre-mRNA-splicing factor slu-7 (slu-7), found in Neurospora crassa (strain ATCC 24698 / 74-OR23-1A / CBS 708.71 / DSM 1257 / FGSC 987).